The sequence spans 156 residues: Small ribosomal subunit protein uS7 (156 aa).

This sequence belongs to the universal ribosomal protein uS7 family. Part of the 30S ribosomal subunit. Contacts proteins S9 and S11.

Its function is as follows. One of the primary rRNA binding proteins, it binds directly to 16S rRNA where it nucleates assembly of the head domain of the 30S subunit. Is located at the subunit interface close to the decoding center, probably blocks exit of the E-site tRNA. The protein is Small ribosomal subunit protein uS7 of Sorangium cellulosum (strain So ce56) (Polyangium cellulosum (strain So ce56)).